Reading from the N-terminus, the 172-residue chain is Resuscitation-promoting factor RpfE (172 aa).

A signal peptide spans M1 to A28. A disordered region spans residues L33–E89. Positions N49–P65 are enriched in pro residues.

Belongs to the transglycosylase family. Rpf subfamily. Interacts with RipA.

In terms of biological role, factor that stimulates resuscitation of dormant cells. Has peptidoglycan (PG) hydrolytic activity. Active in the pM concentration range. Has little to no effect on actively-growing cells. PG fragments could either directly activate the resuscitation pathway of dormant bacteria or serve as a substrate for endogenous Rpf, resulting in low molecular weight products with resuscitation activity. Its function is as follows. Stimulates growth of stationary phase M.bovis (a slow-growing Mycobacterium), reduces the lag phase of diluted fast-growers M.smegmatis and Micrococcus luteus. Sequential gene disruption indicates RpfB and RpfE are higher than RpfD and RpfC in functional hierarchy. The sequence is that of Resuscitation-promoting factor RpfE (rpfE) from Mycobacterium tuberculosis (strain ATCC 25618 / H37Rv).